The sequence spans 375 residues: E3 ubiquitin-protein ligase FANCL (375 aa).

At A2 the chain carries N-acetylalanine. A UBC-RWD region (URD) region spans residues 104–294; that stretch reads LPPPPQFYSS…KDVLEIDFPA (191 aa). C307, C310, C324, C329, H334, C337, C359, and C362 together coordinate Zn(2+). An RING-type; degenerate zinc finger spans residues 307–363; it reads CGICYAYQLDGTIPDQVCDNSQCGQPFHQICLYEWLRGLLTSRQSFNIIFGECPYCS.

In terms of assembly, interacts with GGN. Belongs to the multisubunit FA complex composed of FANCA, FANCB, FANCC, FANCE, FANCF, FANCG, FANCL/PHF9 and FANCM. The complex is not found in FA patients. In complex with FANCF, FANCA and FANCG, but not with FANCC, nor FANCE, interacts with HES1; this interaction may be essential for the stability and nuclear localization of FA core complex proteins. Interacts with FANCI. Directly interacts (via the RING-type zinc finger) with UBE2T and UBE2W. The RING-type zinc finger domain is monoubiquitinated in the presence of UBE2T and UBE2W.

It is found in the cytoplasm. It localises to the nucleus. The enzyme catalyses S-ubiquitinyl-[E2 ubiquitin-conjugating enzyme]-L-cysteine + [acceptor protein]-L-lysine = [E2 ubiquitin-conjugating enzyme]-L-cysteine + N(6)-ubiquitinyl-[acceptor protein]-L-lysine.. The protein operates within protein modification; protein ubiquitination. Ubiquitin ligase protein that mediates monoubiquitination of FANCD2 in the presence of UBE2T, a key step in the DNA damage pathway. Also mediates monoubiquitination of FANCI. May stimulate the ubiquitin release from UBE2W. May be required for proper primordial germ cell proliferation in the embryonic stage, whereas it is probably not needed for spermatogonial proliferation after birth. This chain is E3 ubiquitin-protein ligase FANCL (FANCL), found in Homo sapiens (Human).